Reading from the N-terminus, the 231-residue chain is 7-cyano-7-deazaguanine synthase (231 aa).

8–18 contacts ATP; that stretch reads FSGGQDSTTCL. Positions 188, 197, 200, and 203 each coordinate Zn(2+).

This sequence belongs to the QueC family. Zn(2+) serves as cofactor.

The catalysed reaction is 7-carboxy-7-deazaguanine + NH4(+) + ATP = 7-cyano-7-deazaguanine + ADP + phosphate + H2O + H(+). Its pathway is purine metabolism; 7-cyano-7-deazaguanine biosynthesis. Its function is as follows. Catalyzes the ATP-dependent conversion of 7-carboxy-7-deazaguanine (CDG) to 7-cyano-7-deazaguanine (preQ(0)). The chain is 7-cyano-7-deazaguanine synthase from Salmonella newport (strain SL254).